The primary structure comprises 407 residues: Na(+)-translocating NADH-quinone reductase subunit F (407 aa).

Residues 6–26 (IFLAIGMFTAIVLGLVAIILV) traverse the membrane as a helical segment. A 2Fe-2S ferredoxin-type domain is found at 35–127 (GDVTIQINGE…DMQIRVPEEV (93 aa)). 4 residues coordinate [2Fe-2S] cluster: C70, C76, C79, and C111. Residues 130–269 (VKKWECTVES…YGPFGEFFAK (140 aa)) form the FAD-binding FR-type domain.

The protein belongs to the NqrF family. As to quaternary structure, composed of six subunits; NqrA, NqrB, NqrC, NqrD, NqrE and NqrF. [2Fe-2S] cluster serves as cofactor. The cofactor is FAD.

It localises to the cell inner membrane. It carries out the reaction a ubiquinone + n Na(+)(in) + NADH + H(+) = a ubiquinol + n Na(+)(out) + NAD(+). NQR complex catalyzes the reduction of ubiquinone-1 to ubiquinol by two successive reactions, coupled with the transport of Na(+) ions from the cytoplasm to the periplasm. The first step is catalyzed by NqrF, which accepts electrons from NADH and reduces ubiquinone-1 to ubisemiquinone by a one-electron transfer pathway. This Pseudomonas aeruginosa (strain UCBPP-PA14) protein is Na(+)-translocating NADH-quinone reductase subunit F.